A 515-amino-acid chain; its full sequence is Bifunctional pantoate ligase/cytidylate kinase (515 aa).

The tract at residues M1–V279 is pantoate--beta-alanine ligase. Residue M31–H38 coordinates ATP. The Proton donor role is filled by H38. Q62 contacts (R)-pantoate. Q62 contacts beta-alanine. Residue G149 to D152 participates in ATP binding. Q155 provides a ligand contact to (R)-pantoate. ATP contacts are provided by residues V178 and L186–R189. A cytidylate kinase region spans residues V280–V515.

It in the N-terminal section; belongs to the pantothenate synthetase family. The protein in the C-terminal section; belongs to the cytidylate kinase family. Type 1 subfamily.

The protein localises to the cytoplasm. The enzyme catalyses (R)-pantoate + beta-alanine + ATP = (R)-pantothenate + AMP + diphosphate + H(+). It carries out the reaction CMP + ATP = CDP + ADP. The catalysed reaction is dCMP + ATP = dCDP + ADP. Its pathway is cofactor biosynthesis; (R)-pantothenate biosynthesis; (R)-pantothenate from (R)-pantoate and beta-alanine: step 1/1. In terms of biological role, catalyzes the condensation of pantoate with beta-alanine in an ATP-dependent reaction via a pantoyl-adenylate intermediate. Catalyzes the transfer of a phosphate group from ATP to either CMP or dCMP to form CDP or dCDP and ADP, respectively. This is Bifunctional pantoate ligase/cytidylate kinase from Gloeobacter violaceus (strain ATCC 29082 / PCC 7421).